The sequence spans 479 residues: ATP-dependent protease ATPase subunit HslU (479 aa).

ATP contacts are provided by residues I32, 74–79, D290, E355, and R427; that span reads GVGKTE.

It belongs to the ClpX chaperone family. HslU subfamily. A double ring-shaped homohexamer of HslV is capped on each side by a ring-shaped HslU homohexamer. The assembly of the HslU/HslV complex is dependent on binding of ATP.

Its subcellular location is the cytoplasm. ATPase subunit of a proteasome-like degradation complex; this subunit has chaperone activity. The binding of ATP and its subsequent hydrolysis by HslU are essential for unfolding of protein substrates subsequently hydrolyzed by HslV. HslU recognizes the N-terminal part of its protein substrates and unfolds these before they are guided to HslV for hydrolysis. The sequence is that of ATP-dependent protease ATPase subunit HslU from Leptospira interrogans serogroup Icterohaemorrhagiae serovar copenhageni (strain Fiocruz L1-130).